We begin with the raw amino-acid sequence, 57 residues long: MAKAKGNREKIKLVSSAKTGHFYTTDKNKRNMPEKMEIKKFDPVIRQHVIYKEAKIK.

The protein belongs to the bacterial ribosomal protein bL33 family.

The polypeptide is Large ribosomal subunit protein bL33 (Shewanella amazonensis (strain ATCC BAA-1098 / SB2B)).